A 1005-amino-acid polypeptide reads, in one-letter code: DNA-directed RNA polymerase subunit beta (1005 aa).

This sequence belongs to the RNA polymerase beta chain family. In plastids the minimal PEP RNA polymerase catalytic core is composed of four subunits: alpha, beta, beta', and beta''. When a (nuclear-encoded) sigma factor is associated with the core the holoenzyme is formed, which can initiate transcription (Potential).

It localises to the plastid. Its subcellular location is the apicoplast. The enzyme catalyses RNA(n) + a ribonucleoside 5'-triphosphate = RNA(n+1) + diphosphate. In terms of biological role, DNA-dependent RNA polymerase catalyzes the transcription of DNA into RNA using the four ribonucleoside triphosphates as substrates. This Theileria parva (East coast fever infection agent) protein is DNA-directed RNA polymerase subunit beta (rpoB).